The primary structure comprises 142 residues: Hemoglobin subunit alpha-5 (142 aa).

Positions 2-142 (TFSSAEKAAI…VSAVLVSKYR (141 aa)) constitute a Globin domain. His59 provides a ligand contact to O2. Position 88 (His88) interacts with heme b.

The protein belongs to the globin family. As to quaternary structure, heterotetramer of two alpha chains and two beta chains. As to expression, red blood cells.

This is a larval (tadpole) alpha-globin. This Xenopus laevis (African clawed frog) protein is Hemoglobin subunit alpha-5 (hba5).